We begin with the raw amino-acid sequence, 468 residues long: MQHGDRNTPGYREGIMSAVSLRRPSAPKGFALSVHVVTWNVASAAPTVDLSDLLQLNNQDLNLDIYIIGLQEMNFGIISLLSDAAFEDPWSSLFMDMLSPLNFVKISQVRMQGLLLLVFAKYQHLPYIQIISTKSTPTGLYGYWGNKGGVNVCLKLYGYYVSIINCHLPPHMYNNDQRLEHFDRILESLTFEGYDVPNILDHDLILWFGDMNFRIEDFGLLFVQESITRKYYKELWEKDQLFIAKKNDQLLREFQEGPLLFPPTYKFDRHSNNYDTSEKKRKPAWTDRILWRLKRQPSQASPLASSVPTSYFLLTLKNYVSHMAYSISDHKPVTGTFDLELNPLMSVPLITMMPEHLWTMENDMLISYTSTPEFLSSSWDWIGLYKVGMRHINDYVAYVWVGDNQVSYGNNPNQVYINISAIPDTEDQFLLCYYSNNLHSVVGISQPFKIPIRSFLREDTLYEPEPQI.

The segment at 34 to 337 (VHVVTWNVAS…SDHKPVTGTF (304 aa)) is catalytic. The interval 318-448 (NYVSHMAYSI…HSVVGISQPF (131 aa)) is required for interaction with GPR78 and PAK1. The tract at residues 340–468 (ELNPLMSVPL…DTLYEPEPQI (129 aa)) is required for ruffle localization.

It belongs to the inositol 1,4,5-trisphosphate 5-phosphatase type II family. In terms of assembly, interacts with GPR78; necessary for INPP5K localization at the endoplasmic reticulum. Interacts with PAK1; competes with GPR78. As to expression, expressed in the skeletal muscle and the eye.

The protein resides in the endoplasmic reticulum. The protein localises to the cytoplasm. It catalyses the reaction 1D-myo-inositol 1,4,5-trisphosphate + H2O = 1D-myo-inositol 1,4-bisphosphate + phosphate. The enzyme catalyses 1,2-dioctanoyl-sn-glycero-3-phospho-(1D-myo-inositol-3,4,5-trisphosphate) + H2O = 1,2-dioctanoyl-sn-glycero-3-phospho-(1D-myo-inositol-3,4-bisphosphate) + phosphate. It carries out the reaction 1D-myo-inositol 1,3,4,5-tetrakisphosphate + H2O = 1D-myo-inositol 1,3,4-trisphosphate + phosphate. The catalysed reaction is a 1,2-diacyl-sn-glycero-3-phospho-(1D-myo-inositol-4,5-bisphosphate) + H2O = a 1,2-diacyl-sn-glycero-3-phospho-(1D-myo-inositol 4-phosphate) + phosphate. It catalyses the reaction a 1,2-diacyl-sn-glycero-3-phospho-(1D-myo-inositol-3,4,5-trisphosphate) + H2O = a 1,2-diacyl-sn-glycero-3-phospho-(1D-myo-inositol-3,4-bisphosphate) + phosphate. Functionally, inositol 5-phosphatase which acts on inositol 1,4,5-trisphosphate, inositol 1,3,4,5-tetrakisphosphate, phosphatidylinositol 4,5-bisphosphate and phosphatidylinositol 3,4,5-trisphosphate. Has 6-fold higher affinity for phosphatidylinositol 4,5-bisphosphate than for inositol 1,4,5-trisphosphate. Negatively regulates assembly of the actin cytoskeleton. Controls insulin-dependent glucose uptake among inositol 3,4,5-trisphosphate phosphatases; therefore, is the specific regulator for insulin signaling in skeletal muscle. This chain is Inositol polyphosphate 5-phosphatase K, found in Mus musculus (Mouse).